The sequence spans 244 residues: tRNA (guanine-N(7)-)-methyltransferase (244 aa).

Over residues 1–10 the composition is skewed to polar residues; that stretch reads MSDTPQSPAQ. A disordered region spans residues 1–20; sequence MSDTPQSPAQDSLAEHDEAR. Residues Glu-74, Glu-99, Asp-126, and Asp-149 each coordinate S-adenosyl-L-methionine. Asp-149 is an active-site residue. Substrate contacts are provided by residues Lys-153, Asp-185, and 222–225; that span reads TKFE.

This sequence belongs to the class I-like SAM-binding methyltransferase superfamily. TrmB family.

It carries out the reaction guanosine(46) in tRNA + S-adenosyl-L-methionine = N(7)-methylguanosine(46) in tRNA + S-adenosyl-L-homocysteine. It participates in tRNA modification; N(7)-methylguanine-tRNA biosynthesis. Its function is as follows. Catalyzes the formation of N(7)-methylguanine at position 46 (m7G46) in tRNA. The chain is tRNA (guanine-N(7)-)-methyltransferase from Pseudomonas aeruginosa (strain ATCC 15692 / DSM 22644 / CIP 104116 / JCM 14847 / LMG 12228 / 1C / PRS 101 / PAO1).